We begin with the raw amino-acid sequence, 877 residues long: GTPase activating protein homolog 2 (877 aa).

An F-BAR domain is found at 14–285 (FKFTDNLWDG…SVEMIDITND (272 aa)). A coiled-coil region spans residues 130 to 214 (QEGIKLKQDM…SNCDEEYREQ (85 aa)). Residues 374 to 560 (VSLDELMNRQ…TLIKQIPPPL (187 aa)) enclose the Rho-GAP domain. Disordered stretches follow at residues 589–612 (DQLS…GSGS), 644–704 (LPPL…AEPT), and 749–800 (AATP…LAST). Composition is skewed to low complexity over residues 593–612 (NDDN…GSGS), 653–676 (SGSG…SPTT), and 749–779 (AATP…STST). The segment covering 780-800 (IKTSSPDRTTPLTSSPPLAST) has biased composition (polar residues).

Its subcellular location is the cytoplasm. The protein localises to the contractile vacuole. Functionally, rho GTPase-activating protein involved in the signal transduction pathway. Regulator of the contractile vacuole network as well as involved in driving vacuole emptying. This Dictyostelium discoideum (Social amoeba) protein is GTPase activating protein homolog 2 (mgp2).